The sequence spans 692 residues: Glycine--tRNA ligase beta subunit (692 aa).

This sequence belongs to the class-II aminoacyl-tRNA synthetase family. As to quaternary structure, tetramer of two alpha and two beta subunits.

The protein localises to the cytoplasm. The enzyme catalyses tRNA(Gly) + glycine + ATP = glycyl-tRNA(Gly) + AMP + diphosphate. The sequence is that of Glycine--tRNA ligase beta subunit from Alteromonas mediterranea (strain DSM 17117 / CIP 110805 / LMG 28347 / Deep ecotype).